We begin with the raw amino-acid sequence, 1220 residues long: MASDPRDPGPAGGVFGDLPPSYTRSPPPVNSDLLRRPSYCHAAFALKQISKGKAVGQKAPLWIRARFQAFLFSLGCHIQRHCGKVLFIGLLVFGALSVGLRVAAIETDIEKLWVEAGSRVSKELRYTKEKQGEESVFTSQMLIQTPKQEGTNILTQEALLLHLEAALSASKVQVSLYGKSWDLNKICFKSGVPIIENVMIERMIDKLFPCMIVTPLDCFWEGSKLQGGSAYLPGMPDIQWMNLDPLKLMEELSQFTSLEGFREMLDKAQVGHAYMNRPCLDPSDTDCPHSAPNKDPWQVPNIAAELQGGCHGFSKKFMHWQEELILGERVKDSQNALQSAEALQTMFLLMSPKQLYEHFKDDYEIHDINWNEDKATAILESWQRKFVEVVHGSIPQNSSSNVYAFSTTTLNDIMKSFSDVSVIRVAGGYLLMLAYACVTMLRWDCAKSQGAVGLAGVLLVALSVAAGLGLCSLLGLSFNAATTQVLPSLALGIGVDDMFLLGHSFTETRSNIPFKERTGDCLRRTGTSVALTSVNNMIAFFMAALVPIPALRAFSLQAAVVVVFNFAMALLIFPAILSLDLHRREDKRLDILCCFYSPCSSRVIQIQPQELSDANDNHQRAPATPTYTGSTITTSTHITTTVQAFTQCDAAGQHIVTILPPTSQISTTPPSMVLSTPTPTTDPYGSQVFTTSSSTRDLLAQVEEPKEGRECVPLPFFRWNLSSFAREKYAPLLLKPETKTVVVVVFVALLSLSLYGTTMVHDGLYLTDIVPRDTQEYEFITAQFKYFSFYNMYLVTMDGFDYARSQRQLLQLHNAFNSVKYVVKDGNHKLPRMWLHYFQDWLKGLQATFDADWEAGKITYDSYRNGTEDGALAYKPLIQTGSKKEPFNYSQLTSRRLVDGDGLIPPEVFYIYLTVWVSNDPLGYAASQANFYPHPREWIHDKYDTTGENLRIPAAEPLEFAQFPFYLNGLRQASDFIEAIESVRTICEEFMRQGIKNYPNGYPFLFWEQYIGLRHWFLLSISVVLACTFLVCAILLLNPWTAGVIVFILPMMTVELFGIMGLIGIKLSAIPVVILIASVGIGVEFTVHIALGFLTAIGDRNTRSAVAMEHMFAPVIDGAISTLLGVLMLAGSEFDFIMRYFFAVLAILTLLGILNGLVLLPVLLSLMGPPAEVVPANNANHLQSPSPEPMPPPMNHHGYYAGHIPKASHQAFSETSDSEY.

The interval 1 to 27 (MASDPRDPGPAGGVFGDLPPSYTRSPP) is disordered. The Cytoplasmic segment spans residues 1 to 84 (MASDPRDPGP…GCHIQRHCGK (84 aa)). Residues 85 to 105 (VLFIGLLVFGALSVGLRVAAI) traverse the membrane as a helical segment. The Extracellular segment spans residues 106-419 (ETDIEKLWVE…LNDIMKSFSD (314 aa)). Asn397 carries an N-linked (GlcNAc...) asparagine glycan. Residues 420-440 (VSVIRVAGGYLLMLAYACVTM) traverse the membrane as a helical segment. An SSD domain is found at 421–579 (SVIRVAGGYL…LLIFPAILSL (159 aa)). Residues 441 to 449 (LRWDCAKSQ) lie on the Cytoplasmic side of the membrane. The chain crosses the membrane as a helical span at residues 450-470 (GAVGLAGVLLVALSVAAGLGL). Topologically, residues 471–484 (CSLLGLSFNAATTQ) are extracellular. A helical transmembrane segment spans residues 485–505 (VLPSLALGIGVDDMFLLGHSF). Over 506–528 (TETRSNIPFKERTGDCLRRTGTS) the chain is Cytoplasmic. Residues 529–549 (VALTSVNNMIAFFMAALVPIP) traverse the membrane as a helical segment. Residues 550 to 558 (ALRAFSLQA) lie on the Extracellular side of the membrane. A helical transmembrane segment spans residues 559-579 (AVVVVFNFAMALLIFPAILSL). Over 580–739 (DLHRREDKRL…APLLLKPETK (160 aa)) the chain is Cytoplasmic. A helical transmembrane segment spans residues 740–760 (TVVVVVFVALLSLSLYGTTMV). Residues 761–1016 (HDGLYLTDIV…WEQYIGLRHW (256 aa)) are Extracellular-facing. N-linked (GlcNAc...) asparagine glycosylation is found at Asn865 and Asn888. The chain crosses the membrane as a helical span at residues 1017–1037 (FLLSISVVLACTFLVCAILLL). The Cytoplasmic segment spans residues 1038-1044 (NPWTAGV). The helical transmembrane segment at 1045–1065 (IVFILPMMTVELFGIMGLIGI) threads the bilayer. Residues 1066–1072 (KLSAIPV) are Extracellular-facing. A helical membrane pass occupies residues 1073–1093 (VILIASVGIGVEFTVHIALGF). Residues 1094 to 1110 (LTAIGDRNTRSAVAMEH) lie on the Cytoplasmic side of the membrane. A helical membrane pass occupies residues 1111-1131 (MFAPVIDGAISTLLGVLMLAG). The Extracellular segment spans residues 1132-1143 (SEFDFIMRYFFA). The chain crosses the membrane as a helical span at residues 1144-1164 (VLAILTLLGILNGLVLLPVLL). Residues 1165 to 1220 (SLMGPPAEVVPANNANHLQSPSPEPMPPPMNHHGYYAGHIPKASHQAFSETSDSEY) lie on the Cytoplasmic side of the membrane.

Belongs to the patched family. Post-translationally, glycosylation is necessary for SHH binding. Detected in embryonic presomitic mesoderm, neuroectoderm, tissue surrounding the notochord, ventral neural tube.

It is found in the membrane. In terms of biological role, acts as a receptor for sonic hedgehog (SHH), indian hedgehog (IHH) and desert hedgehog (DHH). Associates with the smoothened protein (SMO) to transduce the hedgehog's proteins signal. This Danio rerio (Zebrafish) protein is Protein patched homolog 1 (ptch1).